The sequence spans 688 residues: Elongation factor G (688 aa).

One can recognise a tr-type G domain in the interval 8–282 (DKFRNFGIMA…GVVDYLPSPL (275 aa)). Residues 17 to 24 (AHIDAGKT), 81 to 85 (DTPGH), and 135 to 138 (NKMD) contribute to the GTP site.

The protein belongs to the TRAFAC class translation factor GTPase superfamily. Classic translation factor GTPase family. EF-G/EF-2 subfamily.

The protein resides in the cytoplasm. In terms of biological role, catalyzes the GTP-dependent ribosomal translocation step during translation elongation. During this step, the ribosome changes from the pre-translocational (PRE) to the post-translocational (POST) state as the newly formed A-site-bound peptidyl-tRNA and P-site-bound deacylated tRNA move to the P and E sites, respectively. Catalyzes the coordinated movement of the two tRNA molecules, the mRNA and conformational changes in the ribosome. This chain is Elongation factor G, found in Clostridium beijerinckii (strain ATCC 51743 / NCIMB 8052) (Clostridium acetobutylicum).